The following is an 815-amino-acid chain: Plakophilin-2 (815 aa).

A compositionally biased stretch (basic and acidic residues) spans 1–12; sequence MLKPHPEHKEQP. Disordered stretches follow at residues 1 to 31 and 76 to 105; these read MLKP…MAEE and QLTL…ISSS. The span at 13–25 shows a compositional bias: polar residues; the sequence is QDSFTPSGDSTPD. Residues 91–105 are compositionally biased toward low complexity; the sequence is SSLAESQSSCQISSS. 9 ARM repeats span residues 317 to 357, 360 to 399, 402 to 442, 457 to 498, 501 to 547, 604 to 644, 652 to 691, 693 to 737, and 740 to 783; these read KGKP…NQCF, PDAK…NIVF, NENK…NLSS, PLTD…NLSS, PDGR…NLSY, PHGV…NLTA, AIAH…NISR, RELH…NLSQ, and ASNT…TLWR.

The protein belongs to the beta-catenin family.

The protein localises to the nucleus. The protein resides in the cell junction. Its subcellular location is the desmosome. It is found in the cytoplasm. In terms of biological role, required for development of the heart, potentially via cell-cell adhesion and modulation of expression of cardiac precursor genes. Plays a role in desmosome cell-cell junctions and their intracellular connectivity. The sequence is that of Plakophilin-2 from Danio rerio (Zebrafish).